The primary structure comprises 470 residues: MKIAITRGLDLSLQGSPKESGFLKRIDPALVSVDLRPYSALALKLKVEQDDVISSGSPIAEYKNFPGVFITSPVSGIVKEIRRGEKRSLLDVVIKKTPGQNLTEYSYDLSKLSRAELLEIFKKEGLFALFKQRPFDIPALPTQTPRDVFINLADNRPFTPSTEKQLAVFSSREEGFYVFNVGVRAVAKLFGLCPHIVSTDRLALPEKDLKSIAHLHKITGPYPSGSPSTHIHYIAPITNEKDIVFTLSFQEVLTIGHLFLKGRILNEQVVALAGSGLKSSLRRYVITTKGANFESLLPLQDISSDVSLISGDPLTGRLCDRESLPCLGMRDSTISVLPNPKTRQAFNFLRLGINKPTHTRTYLSGFLKRKHTYMDPDTNLHGETRPIIDTEIYDKVMPLKIPVVPLIKAVITKDFELACMLGFLEVCPEDFALPTFIDPSKTEMLTIIKDALKDYAKETGILNLEYEDKE.

This sequence belongs to the NqrA family. Composed of six subunits; NqrA, NqrB, NqrC, NqrD, NqrE and NqrF.

It catalyses the reaction a ubiquinone + n Na(+)(in) + NADH + H(+) = a ubiquinol + n Na(+)(out) + NAD(+). Its function is as follows. NQR complex catalyzes the reduction of ubiquinone-1 to ubiquinol by two successive reactions, coupled with the transport of Na(+) ions from the cytoplasm to the periplasm. NqrA to NqrE are probably involved in the second step, the conversion of ubisemiquinone to ubiquinol. This chain is Na(+)-translocating NADH-quinone reductase subunit A, found in Chlamydia caviae (strain ATCC VR-813 / DSM 19441 / 03DC25 / GPIC) (Chlamydophila caviae).